Reading from the N-terminus, the 396-residue chain is Elongation factor Tu-B (396 aa).

The tr-type G domain occupies 10–206 (KLHVNVGTIG…ALDTFIPDPT (197 aa)). The segment at 19 to 26 (GHVDHGKT) is G1. Residue 19–26 (GHVDHGKT) participates in GTP binding. A Mg(2+)-binding site is contributed by Thr-26. The interval 60-64 (GITIS) is G2. A G3 region spans residues 81–84 (DCPG). Residues 81–85 (DCPGH) and 136–139 (NKAD) each bind GTP. Positions 136–139 (NKAD) are G4. Residues 174-176 (SAR) are G5.

Belongs to the TRAFAC class translation factor GTPase superfamily. Classic translation factor GTPase family. EF-Tu/EF-1A subfamily. As to quaternary structure, monomer.

It localises to the cytoplasm. It carries out the reaction GTP + H2O = GDP + phosphate + H(+). In terms of biological role, GTP hydrolase that promotes the GTP-dependent binding of aminoacyl-tRNA to the A-site of ribosomes during protein biosynthesis. The protein is Elongation factor Tu-B of Xanthomonas campestris pv. campestris (strain ATCC 33913 / DSM 3586 / NCPPB 528 / LMG 568 / P 25).